The chain runs to 522 residues: 5,6-dihydroxyindole-2-carboxylic acid oxidase (522 aa).

An N-terminal signal peptide occupies residues 1-21; the sequence is MLRTSCGGMLLLVHALGLVRA. At 22–470 the chain is on the lumenal, melanosome side; it reads QFPRACVTPE…RPLTPTQIVT (449 aa). Cystine bridges form between C27–C38, C39–C59, C50–C89, C91–C100, and C103–C112. Residues N164 and N171 are each glycosylated (N-linked (GlcNAc...) asparagine). Zn(2+) contacts are provided by H182, H205, and H214. Disulfide bonds link C248/C251 and C280/C293. N294 carries an N-linked (GlcNAc...) asparagine glycan. Zn(2+)-binding residues include H367 and H371. N375 carries an N-linked (GlcNAc...) asparagine glycan. H394 contributes to the Zn(2+) binding site. A helical membrane pass occupies residues 471–491; it reads VAVVAALLLVAIIFAASTCVV. At 492–522 the chain is on the cytoplasmic side; sequence HLRGNRTEGRQPLLGDQYQRYEDHNKTQSVV.

It belongs to the tyrosinase family. Cu(2+) serves as cofactor. Zn(2+) is required as a cofactor.

The protein resides in the melanosome membrane. The enzyme catalyses 2 5,6-dihydroxyindole-2-carboxylate + O2 = 2 indole-5,6-quinone-2-carboxylate + 2 H2O. The protein operates within pigment biosynthesis; melanin biosynthesis. Functionally, plays a role in melanin biosynthesis. Catalyzes the oxidation of 5,6-dihydroxyindole-2-carboxylic acid (DHICA) into indole-5,6-quinone-2-carboxylic acid. May regulate or influence the type of melanin synthesized. Also to a lower extent, capable of hydroxylating tyrosine and producing melanin. The sequence is that of 5,6-dihydroxyindole-2-carboxylic acid oxidase (tyrp1) from Carassius auratus (Goldfish).